A 170-amino-acid chain; its full sequence is Cytochrome c-type biogenesis protein CcmE (170 aa).

At 1 to 7 (MTRKQRR) the chain is on the cytoplasmic side. Residues 8-28 (LTIIGGALFVLAVAAGLVLNA) traverse the membrane as a helical; Signal-anchor for type II membrane protein segment. The Periplasmic segment spans residues 29 to 170 (LRDSIVFFST…GEKTAAGATQ (142 aa)). Heme is bound by residues H122 and Y126. A compositionally biased stretch (basic and acidic residues) spans 137-146 (KQGHWKDDYG). Positions 137–170 (KQGHWKDDYGKPQAAKPGPVSMREGEKTAAGATQ) are disordered.

The protein belongs to the CcmE/CycJ family.

It localises to the cell inner membrane. Functionally, heme chaperone required for the biogenesis of c-type cytochromes. Transiently binds heme delivered by CcmC and transfers the heme to apo-cytochromes in a process facilitated by CcmF and CcmH. This chain is Cytochrome c-type biogenesis protein CcmE, found in Bradyrhizobium sp. (strain BTAi1 / ATCC BAA-1182).